We begin with the raw amino-acid sequence, 236 residues long: 2-C-methyl-D-erythritol 4-phosphate cytidylyltransferase (236 aa).

The protein belongs to the IspD/TarI cytidylyltransferase family. IspD subfamily.

It carries out the reaction 2-C-methyl-D-erythritol 4-phosphate + CTP + H(+) = 4-CDP-2-C-methyl-D-erythritol + diphosphate. The protein operates within isoprenoid biosynthesis; isopentenyl diphosphate biosynthesis via DXP pathway; isopentenyl diphosphate from 1-deoxy-D-xylulose 5-phosphate: step 2/6. In terms of biological role, catalyzes the formation of 4-diphosphocytidyl-2-C-methyl-D-erythritol from CTP and 2-C-methyl-D-erythritol 4-phosphate (MEP). This chain is 2-C-methyl-D-erythritol 4-phosphate cytidylyltransferase, found in Burkholderia multivorans (strain ATCC 17616 / 249).